Here is a 296-residue protein sequence, read N- to C-terminus: Malate--CoA ligase subunit alpha (296 aa).

CoA is bound by residues 17–20, lysine 43, and 96–98; these read TGDK and ITD. Histidine 251 functions as the Tele-phosphohistidine intermediate in the catalytic mechanism.

It belongs to the succinate/malate CoA ligase alpha subunit family. Heterotetramer of two alpha and two beta subunits.

The enzyme catalyses (S)-malate + ATP + CoA = (S)-malyl-CoA + ADP + phosphate. It participates in one-carbon metabolism; formaldehyde assimilation via serine pathway. The sequence is that of Malate--CoA ligase subunit alpha (mtkB) from Methylorubrum extorquens (strain ATCC 14718 / DSM 1338 / JCM 2805 / NCIMB 9133 / AM1) (Methylobacterium extorquens).